The following is a 1175-amino-acid chain: Structural maintenance of chromosomes protein 2-1 (1175 aa).

One can recognise a Zinc-hook domain in the interval 2–1161; it reads HIKEICLEGF…NVLFRTKFVD (1160 aa). 32–39 contacts ATP; the sequence is GLNGSGKS. A coiled-coil region spans residues 172 to 508; sequence RMYENKKEAA…AQLANFQFTY (337 aa). One can recognise an SMC hinge domain in the interval 518–638; it reads SKVKGVVAKL…KTTDVAKEVA (121 aa). Residues 673 to 1028 are a coiled coil; that stretch reads LRKLHDLAEA…ELDEKKKETL (356 aa).

Belongs to the SMC family. SMC2 subfamily. In terms of assembly, forms a heterodimer with SMC4. Component of the condensin complex, which contains the SMC2 and SMC4 heterodimer, and three non SMC subunits that probably regulate the complex: CAPH, CAPD2 and CAPG. Highly expressed in roots and young floral buds.

The protein resides in the nucleus. In terms of biological role, central component of the condensin complex, a complex required for conversion of interphase chromatin into mitotic-like condense chromosomes. The condensin complex probably introduces positive supercoils into relaxed DNA in the presence of type I topoisomerases and converts nicked DNA into positive knotted forms in the presence of type II topoisomerases. Also involved in chromosome segregation in meiosis. The chain is Structural maintenance of chromosomes protein 2-1 (SMC2-1) from Arabidopsis thaliana (Mouse-ear cress).